A 123-amino-acid polypeptide reads, in one-letter code: Large ribosomal subunit protein uL14 (123 aa).

Belongs to the universal ribosomal protein uL14 family. In terms of assembly, part of the 50S ribosomal subunit. Forms a cluster with proteins L3 and L19. In the 70S ribosome, L14 and L19 interact and together make contacts with the 16S rRNA in bridges B5 and B8.

In terms of biological role, binds to 23S rRNA. Forms part of two intersubunit bridges in the 70S ribosome. This Photorhabdus laumondii subsp. laumondii (strain DSM 15139 / CIP 105565 / TT01) (Photorhabdus luminescens subsp. laumondii) protein is Large ribosomal subunit protein uL14.